The chain runs to 306 residues: Ribosomal RNA small subunit methyltransferase H (306 aa).

Residues 33-35, D51, F78, D96, and Q103 contribute to the S-adenosyl-L-methionine site; that span reads GGY.

Belongs to the methyltransferase superfamily. RsmH family.

It localises to the cytoplasm. The catalysed reaction is cytidine(1402) in 16S rRNA + S-adenosyl-L-methionine = N(4)-methylcytidine(1402) in 16S rRNA + S-adenosyl-L-homocysteine + H(+). Specifically methylates the N4 position of cytidine in position 1402 (C1402) of 16S rRNA. This is Ribosomal RNA small subunit methyltransferase H from Rickettsia prowazekii (strain Madrid E).